The primary structure comprises 222 residues: uncharacterized protein (222 aa).

Positions 142–222 (ARRGGCVHPP…LPDPPSAGHL (81 aa)) are disordered. Positions 160–169 (QSRSISSRRA) are enriched in low complexity. The span at 182–196 (PRRRPHRHRTRPQTR) shows a compositional bias: basic residues.

This sequence belongs to the Rv1128c/1148c/1588c/1702c/1945/3466 family.

This is an uncharacterized protein from Mycobacterium tuberculosis (strain ATCC 25618 / H37Rv).